Reading from the N-terminus, the 370-residue chain is Queuine tRNA-ribosyltransferase (370 aa).

Residue D89 is the Proton acceptor of the active site. Residues 89 to 93 (DSGGF), D143, Q187, and G214 each bind substrate. An RNA binding region spans residues 245–251 (GVGTPED). D264 functions as the Nucleophile in the catalytic mechanism. Residues 269-273 (TRNAR) form an RNA binding; important for wobble base 34 recognition region. Residues C302, C304, C307, and H333 each coordinate Zn(2+).

Belongs to the queuine tRNA-ribosyltransferase family. As to quaternary structure, homodimer. Within each dimer, one monomer is responsible for RNA recognition and catalysis, while the other monomer binds to the replacement base PreQ1. The cofactor is Zn(2+).

It catalyses the reaction 7-aminomethyl-7-carbaguanine + guanosine(34) in tRNA = 7-aminomethyl-7-carbaguanosine(34) in tRNA + guanine. It participates in tRNA modification; tRNA-queuosine biosynthesis. Its function is as follows. Catalyzes the base-exchange of a guanine (G) residue with the queuine precursor 7-aminomethyl-7-deazaguanine (PreQ1) at position 34 (anticodon wobble position) in tRNAs with GU(N) anticodons (tRNA-Asp, -Asn, -His and -Tyr). Catalysis occurs through a double-displacement mechanism. The nucleophile active site attacks the C1' of nucleotide 34 to detach the guanine base from the RNA, forming a covalent enzyme-RNA intermediate. The proton acceptor active site deprotonates the incoming PreQ1, allowing a nucleophilic attack on the C1' of the ribose to form the product. After dissociation, two additional enzymatic reactions on the tRNA convert PreQ1 to queuine (Q), resulting in the hypermodified nucleoside queuosine (7-(((4,5-cis-dihydroxy-2-cyclopenten-1-yl)amino)methyl)-7-deazaguanosine). The chain is Queuine tRNA-ribosyltransferase from Aromatoleum aromaticum (strain DSM 19018 / LMG 30748 / EbN1) (Azoarcus sp. (strain EbN1)).